The following is a 251-amino-acid chain: 2,3-bisphosphoglycerate-dependent phosphoglycerate mutase (251 aa).

Residues 11 to 18 (RHGESDWN), 24 to 25 (TG), R63, 90 to 93 (ERHY), K101, 117 to 118 (RR), and 184 to 185 (GN) contribute to the substrate site. The active-site Tele-phosphohistidine intermediate is the H12. The active-site Proton donor/acceptor is E90.

This sequence belongs to the phosphoglycerate mutase family. BPG-dependent PGAM subfamily.

It carries out the reaction (2R)-2-phosphoglycerate = (2R)-3-phosphoglycerate. The protein operates within carbohydrate degradation; glycolysis; pyruvate from D-glyceraldehyde 3-phosphate: step 3/5. Catalyzes the interconversion of 2-phosphoglycerate and 3-phosphoglycerate. This is 2,3-bisphosphoglycerate-dependent phosphoglycerate mutase from Mycobacterium ulcerans (strain Agy99).